The chain runs to 159 residues: Phosphopantetheine adenylyltransferase (159 aa).

Threonine 10 contacts substrate. Residues 10–11 (TF) and histidine 18 each bind ATP. Substrate-binding residues include lysine 42, methionine 74, and arginine 88. ATP-binding positions include 89-91 (GLR), glutamate 99, and 124-130 (WSFISSS).

Belongs to the bacterial CoaD family. Homohexamer. Mg(2+) serves as cofactor.

It localises to the cytoplasm. It catalyses the reaction (R)-4'-phosphopantetheine + ATP + H(+) = 3'-dephospho-CoA + diphosphate. It participates in cofactor biosynthesis; coenzyme A biosynthesis; CoA from (R)-pantothenate: step 4/5. Reversibly transfers an adenylyl group from ATP to 4'-phosphopantetheine, yielding dephospho-CoA (dPCoA) and pyrophosphate. This is Phosphopantetheine adenylyltransferase from Escherichia fergusonii (strain ATCC 35469 / DSM 13698 / CCUG 18766 / IAM 14443 / JCM 21226 / LMG 7866 / NBRC 102419 / NCTC 12128 / CDC 0568-73).